The chain runs to 423 residues: Haloacid dehalogenase-like hydrolase domain-containing 5 (423 aa).

An N-terminal signal peptide occupies residues 1-23 (MAAWGCVAALGAARGLCWRAARA).

This sequence belongs to the HAD-like hydrolase superfamily. As to expression, widely expressed.

This is Haloacid dehalogenase-like hydrolase domain-containing 5 from Homo sapiens (Human).